Here is a 167-residue protein sequence, read N- to C-terminus: Probable D-lyxose ketol-isomerase (167 aa).

4 residues coordinate Mn(2+): H69, H71, E82, and H137.

The protein belongs to the D-lyxose ketol-isomerase family. Homodimer. Requires Mn(2+) as cofactor.

The enzyme catalyses D-lyxose = D-xylulose. Its function is as follows. Sugar isomerase that catalyzes the reversible isomerization of D-lyxose to D-xylulose. In Bacillus subtilis (strain 168), this protein is Probable D-lyxose ketol-isomerase (ydaE).